Here is a 174-residue protein sequence, read N- to C-terminus: uncharacterized protein (174 aa).

Residues 42 to 174 form the N-acetyltransferase domain; that stretch reads SNTKNINLYE…GVKGMFWYPR (133 aa).

The protein belongs to the acetyltransferase family. Ycf52 subfamily.

Its subcellular location is the plastid. It is found in the chloroplast. This is an uncharacterized protein from Porphyra purpurea (Red seaweed).